A 291-amino-acid chain; its full sequence is Protein SpdB (291 aa).

Transmembrane regions (helical) follow at residues 24 to 44 (VVVI…LVVG), 71 to 91 (ITGV…AHAL), and 99 to 119 (WLAV…HGLW).

The protein localises to the cell membrane. Functionally, involved in plasmid transfer. The polypeptide is Protein SpdB (spdB) (Streptomyces lividans).